The chain runs to 945 residues: Leucine--tRNA ligase 1 (945 aa).

The 'HIGH' region motif lies at 42–52; sequence PYTNSPLHIGH. Residues 625 to 629 carry the 'KMSKS' region motif; sequence KMSKS. Residue Lys628 coordinates ATP.

Belongs to the class-I aminoacyl-tRNA synthetase family.

The protein localises to the cytoplasm. It carries out the reaction tRNA(Leu) + L-leucine + ATP = L-leucyl-tRNA(Leu) + AMP + diphosphate. The sequence is that of Leucine--tRNA ligase 1 from Sulfurisphaera tokodaii (strain DSM 16993 / JCM 10545 / NBRC 100140 / 7) (Sulfolobus tokodaii).